A 561-amino-acid polypeptide reads, in one-letter code: Rho guanine nucleotide exchange factor 9 (561 aa).

In terms of domain architecture, SH3 spans 53 to 112 (DSIVSAEAVWDHVTMANRELAFKAGDVIKVLDASNKDWWWGQIDDEEGWFPASFVRLWVN). The tract at residues 145–155 (RDQMRANVINE) is interaction with GPHN. Residues 148–332 (MRANVINEIM…RNVTQQINER (185 aa)) enclose the DH domain. Residues 363–470 (ELIYTGEMAW…WLRAFREERK (108 aa)) enclose the PH domain. A disordered region spans residues 499–524 (KQKGVNSARSVPPSYPPPQDPLNQGQ). Residue Ser-547 is modified to Phosphoserine.

In terms of assembly, interacts with GPHN.

Its subcellular location is the cytoplasm. The protein resides in the postsynaptic density. Acts as a guanine nucleotide exchange factor (GEF) for CDC42. Promotes formation of GPHN clusters. The sequence is that of Rho guanine nucleotide exchange factor 9 (ARHGEF9) from Bos taurus (Bovine).